Here is a 614-residue protein sequence, read N- to C-terminus: Zinc metalloproteinase-disintegrin-like Eoc1 (614 aa).

A signal peptide spans 1–19 (MQVLLITISLAVLPYLGSS). Residues 20–193 (IILESGIVND…KASQLNLTPE (174 aa)) constitute a propeptide that is removed on maturation. Pyrrolidone carboxylic acid is present on glutamine 194. The Peptidase M12B domain maps to 202 to 398 (KHIKVAIVAD…KMPQCILIKP (197 aa)). A glycan (N-linked (GlcNAc...) asparagine) is linked at asparagine 268. 3 disulfides stabilise this stretch: cysteine 313-cysteine 393, cysteine 353-cysteine 377, and cysteine 355-cysteine 360. Histidine 338 provides a ligand contact to Zn(2+). The active site involves glutamate 339. Zn(2+) contacts are provided by histidine 342 and histidine 348. A glycan (N-linked (GlcNAc...) asparagine) is linked at asparagine 376. The 87-residue stretch at 406–492 (PPVCGNSLVE…ECPADQFQRN (87 aa)) folds into the Disintegrin domain. Positions 408, 411, 413, 415, 418, and 421 each coordinate Ca(2+). Cystine bridges form between cysteine 409–cysteine 438, cysteine 420–cysteine 433, cysteine 422–cysteine 428, cysteine 432–cysteine 455, cysteine 446–cysteine 452, cysteine 451–cysteine 477, cysteine 464–cysteine 484, cysteine 471–cysteine 503, cysteine 496–cysteine 508, cysteine 515–cysteine 565, cysteine 530–cysteine 576, cysteine 543–cysteine 553, cysteine 560–cysteine 602, and cysteine 596–cysteine 607. The D/ECD-tripeptide signature appears at 470-472 (ECD). N-linked (GlcNAc...) asparagine glycosylation occurs at asparagine 498.

The protein belongs to the venom metalloproteinase (M12B) family. P-III subfamily. P-IIIc sub-subfamily. As to quaternary structure, heterodimer; disulfide-linked. Zn(2+) serves as cofactor. Expressed by the venom gland.

The protein localises to the secreted. This metalloproteinase hydrolyzes azocasein, and oxidized insulin B-chain. Also hydrolyzes the alpha-chain (FGA) and more slowly the beta-chain of fibrinogen (FGB), without affecting the gamma-chain. Does not cleave fibrin. Inhibits endothelial cell adhesion to extracellular matrix proteins such as fibrinogen, fibronectin, vitronectin, collagen I, and collagen IV. Induces apoptosis in vascular endothelial cells. The chain is Zinc metalloproteinase-disintegrin-like Eoc1 (Svmp3-Eoc1) from Echis ocellatus (Ocellated saw-scaled viper).